The chain runs to 198 residues: MPLKLRVAGVDEAGRGPLAGAVFAAAVILDPAKPIAGLADSKVLSEAQRDELAVLIKRDALAWCVASASVEEIDKLNILHATMLAMTRAVEGLPVRPDLAQIDGNRVPKHLPVPGEAIVKGDAKVAAISAASILAKTARDAELVALDALHPQYGFARHKGYPTAEHLAAIEAHGVLPAHRKTFGPVKAWLASHQGALF.

Residues 5–195 (LRVAGVDEAG…VKAWLASHQG (191 aa)) enclose the RNase H type-2 domain. A divalent metal cation contacts are provided by aspartate 11, glutamate 12, and aspartate 103.

It belongs to the RNase HII family. Mn(2+) is required as a cofactor. It depends on Mg(2+) as a cofactor.

The protein resides in the cytoplasm. The catalysed reaction is Endonucleolytic cleavage to 5'-phosphomonoester.. Its function is as follows. Endonuclease that specifically degrades the RNA of RNA-DNA hybrids. The chain is Ribonuclease HII from Chromobacterium violaceum (strain ATCC 12472 / DSM 30191 / JCM 1249 / CCUG 213 / NBRC 12614 / NCIMB 9131 / NCTC 9757 / MK).